The following is a 290-amino-acid chain: Small ribosomal subunit protein uS2 (290 aa).

Positions 263-282 (ATAGATWEAEAGGDWAAESA) are enriched in low complexity. The disordered stretch occupies residues 263–290 (ATAGATWEAEAGGDWAAESAQPNPETKW).

It belongs to the universal ribosomal protein uS2 family. As to quaternary structure, component of the small ribosomal subunit. Mature ribosomes consist of a small (40S) and a large (60S) subunit. The 40S subunit contains about 33 different proteins and 1 molecule of RNA (18S). The 60S subunit contains about 49 different proteins and 3 molecules of RNA (25S, 5.8S and 5S). Interacts with rps21.

The protein localises to the cytoplasm. Functionally, required for the assembly and/or stability of the 40S ribosomal subunit. Required for the processing of the 20S rRNA-precursor to mature 18S rRNA in a late step of the maturation of 40S ribosomal subunits. The chain is Small ribosomal subunit protein uS2 (rps0) from Talaromyces stipitatus (strain ATCC 10500 / CBS 375.48 / QM 6759 / NRRL 1006) (Penicillium stipitatum).